A 58-amino-acid chain; its full sequence is Alpha-conotoxin-like Pu1.6 (58 aa).

A signal peptide spans 1–17 (MFTVFLLVVLVTTVVFS). The propeptide occupies 18–35 (TSDHRPASNHENRRASKR). Intrachain disulfides connect C44–C50 and C45–C58. The segment at 46-48 (TNP) is lacks the Ser-Xaa-Pro motif that is crucial for potent interaction with nAChR.

It belongs to the conotoxin A superfamily. In terms of tissue distribution, expressed by the venom duct.

The protein resides in the secreted. In terms of biological role, alpha-conotoxins act on postsynaptic membranes, they bind to the nicotinic acetylcholine receptors (nAChR) and thus inhibit them. Has possibly a distinct nAChR binding mode from other alpha-conotoxins, due to a different three residue motif (lacks the Ser-Xaa-Pro motif). This is Alpha-conotoxin-like Pu1.6 from Conus pulicarius (Flea-bitten cone).